A 1374-amino-acid polypeptide reads, in one-letter code: Serine/threonine-protein kinase LMTK1 (1374 aa).

Residues 32-52 (LAVVAVSFSGLFAVIVLMLAC) traverse the membrane as a helical segment. One can recognise a Protein kinase domain in the interval 125–395 (LLYLKEIGRG…PTAEEVHLLL (271 aa)). Residues 131–139 (IGRGWFGKV) and Lys156 each bind ATP. The Proton acceptor role is filled by Asp253. Phosphoserine is present on Ser495. Disordered regions lie at residues 542–622 (GHDP…LAEG), 667–731 (VGAR…LLGL), 765–1195 (WTET…PAVP), 1245–1302 (QESP…AWDD), and 1320–1374 (AAPA…SKEA). Residues 606–620 (PSRSPSPSAGPLSLA) show a composition bias toward low complexity. The segment covering 680–690 (SNVSANNNSGS) has biased composition (polar residues). Low complexity-rich tracts occupy residues 719-731 (PEPG…LLGL), 801-831 (SPSQ…TPAT), and 847-856 (SSSSPEVEAP). Over residues 865-878 (EATSGIFTDTSSDG) the composition is skewed to polar residues. Low complexity predominate over residues 900–914 (PDSLDSLDIPSSASD). A compositionally biased stretch (polar residues) spans 978-987 (RLSTSLSGLN). Position 1029 is a phosphoserine (Ser1029). Residues 1063-1073 (EGSSPEPSTCP) show a composition bias toward polar residues. Residues 1138–1155 (TPRAPLRLALPGLPAALE) are compositionally biased toward low complexity. Residues 1158–1173 (PEEEEEDSEDSDESDE) show a composition bias toward acidic residues. A phosphoserine mark is found at Ser1168, Ser1171, Ser1184, Ser1187, and Ser1262. The segment covering 1272–1291 (GSPSAPNRPQQADGSPNGST) has biased composition (polar residues). Residues 1321–1332 (APAPAAPTPTPA) are compositionally biased toward pro residues. Positions 1337–1352 (FTVSPAPTSRFSITHV) are enriched in polar residues. Basic and acidic residues predominate over residues 1353–1363 (SDSDAESKRGP). Gly residues predominate over residues 1365–1374 (AGAGGESKEA).

The protein belongs to the protein kinase superfamily. Tyr protein kinase family. Interacts with CDK5. In terms of processing, autophosphorylated. Phosphorylated by CDK5. As to expression, expressed in brain.

Its subcellular location is the membrane. The protein resides in the cytoplasm. It localises to the perinuclear region. It catalyses the reaction L-seryl-[protein] + ATP = O-phospho-L-seryl-[protein] + ADP + H(+). The catalysed reaction is L-threonyl-[protein] + ATP = O-phospho-L-threonyl-[protein] + ADP + H(+). Its function is as follows. May be involved in neuronal differentiation. The sequence is that of Serine/threonine-protein kinase LMTK1 (AATK) from Homo sapiens (Human).